The chain runs to 389 residues: Chalcone synthase J (389 aa).

Cysteine 164 is a catalytic residue.

Belongs to the thiolase-like superfamily. Chalcone/stilbene synthases family.

It carries out the reaction (E)-4-coumaroyl-CoA + 3 malonyl-CoA + 3 H(+) = 2',4,4',6'-tetrahydroxychalcone + 3 CO2 + 4 CoA. It functions in the pathway secondary metabolite biosynthesis; flavonoid biosynthesis. Its function is as follows. The primary product of this enzyme is 4,2',4',6'-tetrahydroxychalcone (also termed naringenin-chalcone or chalcone) which can under specific conditions spontaneously isomerize into naringenin. The protein is Chalcone synthase J (CHSJ) of Petunia hybrida (Petunia).